Consider the following 140-residue polypeptide: Large ribosomal subunit protein uL11 (140 aa).

Belongs to the universal ribosomal protein uL11 family. Part of the ribosomal stalk of the 50S ribosomal subunit. Interacts with L10 and the large rRNA to form the base of the stalk. L10 forms an elongated spine to which L12 dimers bind in a sequential fashion forming a multimeric L10(L12)X complex. In terms of processing, one or more lysine residues are methylated.

In terms of biological role, forms part of the ribosomal stalk which helps the ribosome interact with GTP-bound translation factors. This Staphylococcus epidermidis (strain ATCC 35984 / DSM 28319 / BCRC 17069 / CCUG 31568 / BM 3577 / RP62A) protein is Large ribosomal subunit protein uL11.